The chain runs to 259 residues: DNA-directed RNA polymerase subunit Rpo3 (259 aa).

Belongs to the archaeal Rpo3/eukaryotic RPB3 RNA polymerase subunit family. Part of the RNA polymerase complex.

The protein resides in the cytoplasm. The catalysed reaction is RNA(n) + a ribonucleoside 5'-triphosphate = RNA(n+1) + diphosphate. DNA-dependent RNA polymerase (RNAP) catalyzes the transcription of DNA into RNA using the four ribonucleoside triphosphates as substrates. This Pyrobaculum arsenaticum (strain DSM 13514 / JCM 11321 / PZ6) protein is DNA-directed RNA polymerase subunit Rpo3.